Reading from the N-terminus, the 39-residue chain is Contryphan-Cal4 (39 aa).

A signal peptide spans 1–20 (MTRTAVLLLTLLFLVAMAAS). A disulfide bridge links Cys-29 with Cys-35.

As to expression, expressed by the venom duct.

Its subcellular location is the secreted. In terms of biological role, probable neurotoxin. The chain is Contryphan-Cal4 from Californiconus californicus (California cone).